The following is a 275-amino-acid chain: 2,3,4,5-tetrahydropyridine-2,6-dicarboxylate N-succinyltransferase (275 aa).

R106 and D143 together coordinate substrate.

It belongs to the transferase hexapeptide repeat family. In terms of assembly, homotrimer.

The protein resides in the cytoplasm. It carries out the reaction (S)-2,3,4,5-tetrahydrodipicolinate + succinyl-CoA + H2O = (S)-2-succinylamino-6-oxoheptanedioate + CoA. It participates in amino-acid biosynthesis; L-lysine biosynthesis via DAP pathway; LL-2,6-diaminopimelate from (S)-tetrahydrodipicolinate (succinylase route): step 1/3. The chain is 2,3,4,5-tetrahydropyridine-2,6-dicarboxylate N-succinyltransferase from Burkholderia pseudomallei (strain 1106a).